We begin with the raw amino-acid sequence, 531 residues long: Light-independent protochlorophyllide reductase subunit B (531 aa).

Asp-36 contributes to the [4Fe-4S] cluster binding site. Asp-291 (proton donor) is an active-site residue. Residue 426 to 427 participates in substrate binding; it reads GL.

It belongs to the ChlB/BchB/BchZ family. As to quaternary structure, protochlorophyllide reductase is composed of three subunits; ChlL, ChlN and ChlB. Forms a heterotetramer of two ChlB and two ChlN subunits. It depends on [4Fe-4S] cluster as a cofactor.

The catalysed reaction is chlorophyllide a + oxidized 2[4Fe-4S]-[ferredoxin] + 2 ADP + 2 phosphate = protochlorophyllide a + reduced 2[4Fe-4S]-[ferredoxin] + 2 ATP + 2 H2O. Its pathway is porphyrin-containing compound metabolism; chlorophyll biosynthesis (light-independent). Component of the dark-operative protochlorophyllide reductase (DPOR) that uses Mg-ATP and reduced ferredoxin to reduce ring D of protochlorophyllide (Pchlide) to form chlorophyllide a (Chlide). This reaction is light-independent. The NB-protein (ChlN-ChlB) is the catalytic component of the complex. The chain is Light-independent protochlorophyllide reductase subunit B from Prochlorococcus marinus (strain MIT 9211).